The chain runs to 3011 residues: Genome polyprotein (3011 aa).

N-acetylserine; by host is present on serine 2. Residues 2 to 23 (STNPKPQRKTKRNTNRRPQDVK) are interaction with STAT1. The segment at 2–58 (STNPKPQRKTKRNTNRRPQDVKFPGGGQIVGGVYLLPRRGPRVGVRATRKTSERSQP) is interaction with EIF2AK2/PKR. An interaction with DDX3X region spans residues 2 to 59 (STNPKPQRKTKRNTNRRPQDVKFPGGGQIVGGVYLLPRRGPRVGVRATRKTSERSQPR). The tract at residues 2-75 (STNPKPQRKT…PKARRPEGRS (74 aa)) is disordered. The Cytoplasmic portion of the chain corresponds to 2-168 (STNPKPQRKT…EDGVNYATGN (167 aa)). 2 short sequence motifs (nuclear localization signal) span residues 5–13 (PKPQRKTKR) and 38–43 (PRRGPR). Basic residues predominate over residues 7 to 16 (PQRKTKRNTN). The residue at position 53 (serine 53) is a Phosphoserine; by host. 2 consecutive short sequence motifs (nuclear localization signal) follow at residues 58–64 (PRGRRQP) and 66–71 (PKARRP). Residues 58–68 (PRGRRQPIPKA) are compositionally biased toward basic residues. Phosphoserine; by host is present on serine 99. The segment at 112-152 (PRRRSRNLGKVIDTLTCGFADLMGYIPLVGAPLGGAARALA) is important for endoplasmic reticulum and mitochondrial localization. The residue at position 116 (serine 116) is a Phosphoserine; by host PKA. Residues 122 to 173 (VIDTLTCGFADLMGYIPLVGAPLGGAARALAHGVRVLEDGVNYATGNLPGCS) form an interaction with APOA2 region. Residues 164–167 (YATG) are important for lipid droplets localization. Residues 169–189 (LPGCSFSIFLLALLSCLTVPA) form a helical membrane-spanning segment. The propeptide at 178-191 (LLALLSCLTVPASA) is ER anchor for the core protein, removed in mature form by host signal peptidase. The Lumenal portion of the chain corresponds to 190 to 358 (SAVGVRNSSG…AGAHWGVLAG (169 aa)). N-linked (GlcNAc...) asparagine; by host glycosylation is found at asparagine 196, asparagine 209, and asparagine 234. The segment at 265 to 296 (IVGAAAFCSAMYVGDLCGSIFLVGQIFTFSPR) is important for fusion. A glycan (N-linked (GlcNAc...) asparagine; by host) is linked at asparagine 305. The chain crosses the membrane as a helical span at residues 359–379 (LAYYSMVGNWAKVVVVLLLFA). At 380–725 (GVDAETRVTG…WEYVVLLFLL (346 aa)) the chain is on the lumenal side. Residues 385–411 (TRVTGGAAGHTAFGFASFLAPGAKQKI) are HVR1. N-linked (GlcNAc...) (high mannose) asparagine; by host glycosylation is found at asparagine 417, asparagine 423, asparagine 430, and asparagine 448. 4 disulfide bridges follow: cysteine 429–cysteine 552, cysteine 452–cysteine 459, cysteine 486–cysteine 494, and cysteine 503–cysteine 508. Residues 474–479 (HEGNAS) form an HVR2 region. The tract at residues 480–493 (DDQRPYCWHYALRP) is CD81-binding 1. Asparagine 532 is a glycosylation site (N-linked (GlcNAc...) (high mannose) asparagine; by host). N-linked (GlcNAc...) asparagine; by host glycosylation occurs at asparagine 540. Residues 544–551 (PPMGNWFG) form a CD81-binding 2 region. N-linked (GlcNAc...) (high mannose) asparagine; by host glycosylation is present at asparagine 556. Cysteine 564 and cysteine 569 are joined by a disulfide. N-linked (GlcNAc...) (high mannose) asparagine; by host glycosylation is present at asparagine 576. 3 disulfide bridges follow: cysteine 581/cysteine 585, cysteine 597/cysteine 620, and cysteine 607/cysteine 644. N-linked (GlcNAc...) (high mannose) asparagine; by host glycans are attached at residues asparagine 623 and asparagine 645. An intrachain disulfide couples cysteine 652 to cysteine 677. The PKR/eIF2-alpha phosphorylation homology domain (PePHD) stretch occupies residues 660–671 (AELSPLLLSTTQ). The chain crosses the membrane as a helical span at residues 726-746 (LADARICACLWMMLLISQVEA). Residues 747–757 (ALENLIVLNAA) are Lumenal-facing. Residues 758–778 (SLVGTHGIVPFFIFFCAAWYL) form a helical membrane-spanning segment. Topologically, residues 779-781 (KGK) are cytoplasmic. The chain crosses the membrane as a helical span at residues 782 to 803 (WAPGLAYSVYGMWPLLLLLLAL). Topologically, residues 804–813 (PQRAYALDQE) are lumenal. Residues 814-834 (LAASCGATVFICLAVLTLSPY) traverse the membrane as a helical segment. At 835 to 838 (YKQY) the chain is on the cytoplasmic side. A helical transmembrane segment spans residues 839 to 859 (MARGIWWLQYMLTRAEALLQV). Over 860-881 (WVPPLNARGGRDGVVLLTCVLH) the chain is Lumenal. The chain crosses the membrane as a helical span at residues 882–902 (PHLLFEITKIMLAILGPLWIL). The 124-residue stretch at 903-1026 (QASLLKVPYF…ALTDKGWRLL (124 aa)) folds into the Peptidase C18 domain. Residues 903-1657 (QASLLKVPYF…CMSADLEVVT (755 aa)) lie on the Cytoplasmic side of the membrane. A protease NS2-3 region spans residues 904 to 1206 (ASLLKVPYFV…PVESLETTMR (303 aa)). The S-palmitoyl cysteine; by host moiety is linked to residue cysteine 922. The interaction with host SCPS1 stretch occupies residues 929 to 949 (AGGQYVQMALLKLGAFAGTYI). Active-site for protease NS2 activity; shared with dimeric partner residues include histidine 952, glutamate 972, and cysteine 993. Residues 1027–1208 (APITAYAQQT…ESLETTMRSP (182 aa)) enclose the Peptidase S29 domain. Catalysis depends on charge relay system; for serine protease NS3 activity residues histidine 1083 and aspartate 1107. Positions 1123 and 1125 each coordinate Zn(2+). Serine 1165 functions as the Charge relay system; for serine protease NS3 activity in the catalytic mechanism. Zn(2+) is bound by residues cysteine 1171 and histidine 1175. Residues 1217 to 1369 (PTVPQSYQVA…SNIEEVALST (153 aa)) enclose the Helicase ATP-binding domain. 1230–1237 (APTGSGKS) is a binding site for ATP. Mg(2+) contacts are provided by serine 1237 and glutamate 1317. Residues 1316-1319 (DECH) carry the DECH box motif. An RNA-binding region spans residues 1486 to 1497 (QRRGRTGRGKHG). Residues 1658 to 1678 (STWVLVGGVLAALAAYCLSTG) traverse the membrane as a helical segment. The NS3-binding stretch occupies residues 1679–1690 (SVVIVGRIILSG). Residues 1679-1805 (SVVIVGRIIL…AVTSPLTTQQ (127 aa)) lie on the Cytoplasmic side of the membrane. Residues 1806–1824 (TLLFNILGGWVAAQLAAPA) form a helical membrane-spanning segment. Topologically, residues 1825–1828 (AATA) are lumenal. The helical transmembrane segment at 1829–1849 (FVGAGITGAVIGSVGLGKVLV) threads the bilayer. Position 1850 (aspartate 1850) is a topological domain, cytoplasmic. Residues 1851-1871 (ILAGYGAGVAGALVAFKIMSG) traverse the membrane as a helical segment. The Lumenal segment spans residues 1872–1881 (EAPTAEDLVN). Residues 1882–1902 (LLPAILSPGALVVGVVCAAIL) traverse the membrane as a helical segment. The Cytoplasmic portion of the chain corresponds to 1903-1972 (RRHVGPGEGA…WISSDCTAPC (70 aa)). Residues cysteine 1968 and cysteine 1972 are each lipidated (S-palmitoyl cysteine; by host). Residues 1973–2002 (AGSWLKDVWDWICEVLSDFKSWLKAKLMPQ) lie within the membrane without spanning it. At 2003–2990 (LPGIPFVSCQ…YHSVSHVRPR (988 aa)) the chain is on the cytoplasmic side. The Zn(2+) site is built by cysteine 2011, cysteine 2029, cysteine 2031, and cysteine 2052. The tract at residues 2120 to 2208 (EFFTEVDGVR…ASSSASQLSA (89 aa)) is FKBP8-binding. Positions 2120-2332 (EFFTEVDGVR…PVPPPRRKRT (213 aa)) are transcriptional activation. An interaction with non-structural protein 4A region spans residues 2135 to 2139 (PPCKP). Residues 2189-2441 (RLNRGSPPSL…TPCAAEETKL (253 aa)) form an interaction with host SKP2 region. Serine 2194 is subject to Phosphoserine; by host; in p56. Serine 2197, serine 2201, serine 2204, serine 2207, and serine 2210 each carry phosphoserine; by host; in p58. The interval 2210–2249 (SLKATCTTHHDSPDADLITANLLWRQEMGGNITRVESENK) is ISDR. Residues 2210-2275 (SLKATCTTHH…REISVPAEIL (66 aa)) are interaction with EIF2AK2/PKR. The NS4B-binding stretch occupies residues 2249 to 2306 (KIVILDSFDPLVAEEDDREISVPAEILLKSKKFPPAMPIWARPDYNPPLVEPWKRPDY). The SH3-binding motif lies at 2322–2325 (TPVP). The Nuclear localization signal motif lies at 2326 to 2334 (PPRRKRTVV). Lysine 2350 is covalently cross-linked (Glycyl lysine isopeptide (Lys-Gly) (interchain with G-Cter in ubiquitin)). The span at 2352-2373 (FGSSTTSGVTSGEAAESSPAPS) shows a compositional bias: low complexity. The segment at 2352-2409 (FGSSTTSGVTSGEAAESSPAPSCDGELDSEAESYSSMPPLEGEPGDPDLSDGSWSTVS) is disordered. The segment at 2354-2377 (SSTTSGVTSGEAAESSPAPSCDGE) is V3. Phosphoserine; by host is present on residues serine 2449 and serine 2462. The RdRp catalytic domain occupies 2634 to 2752 (PMGFSYDTRC…ICESAGVQED (119 aa)). Positions 2640, 2738, and 2739 each coordinate Mg(2+). A helical transmembrane segment spans residues 2991 to 3011 (WFFWCLLLLSVGVGIYLLPNR).

This sequence belongs to the hepacivirus polyprotein family. As to quaternary structure, homooligomer. Interacts with E1 (via C-terminus). Interacts with the non-structural protein 5A. Interacts (via N-terminus) with host STAT1 (via SH2 domain); this interaction results in decreased STAT1 phosphorylation and ubiquitin-mediated proteasome-dependent STAT1 degradation, leading to decreased IFN-stimulated gene transcription. Interacts with host STAT3; this interaction constitutively activates STAT3. Interacts with host LTBR receptor. Interacts with host TNFRSF1A receptor and possibly induces apoptosis. Interacts with host HNRPK. Interacts with host YWHAE. Interacts with host UBE3A/E6AP. Interacts with host DDX3X. Interacts with host APOA2. Interacts with host RXRA protein. Interacts with host SP110 isoform 3/Sp110b; this interaction sequesters the transcriptional corepressor SP110 away from the nucleus. Interacts with host CREB3 nuclear transcription protein; this interaction triggers cell transformation. Interacts with host ACY3. Interacts with host C1QR1. Interacts with host RBM24; this interaction, which enhances the interaction of the mature core protein with 5'-UTR, may inhibit viral translation and favor replication. Interacts with host EIF2AK2/PKR; this interaction induces the autophosphorylation of EIF2AK2. Part of the viral assembly initiation complex composed of NS2, E1, E2, NS3, NS4A, NS5A and the mature core protein. Forms a heterodimer with envelope glycoprotein E2. Interacts with mature core protein. Interacts with protease NS2. The heterodimer E1/E2 interacts with host CLDN1; this interaction plays a role in viral entry into host cell. Interacts with host SPSB2 (via C-terminus). Part of the viral assembly initiation complex composed of NS2, E1, E2, NS3, NS4A, NS5A and the mature core protein. Interacts with host NEURL3; this interaction prevents E1 binding to glycoprotein E2. In terms of assembly, forms a heterodimer with envelope glycoprotein E1. Interacts with host CD81 and SCARB1 receptors; these interactions play a role in viral entry into host cell. Interacts with host EIF2AK2/PKR; this interaction inhibits EIF2AK2 and probably allows the virus to evade the innate immune response. Interacts with host CD209/DC-SIGN and CLEC4M/DC-SIGNR. Interact with host SPCS1; this interaction is essential for viral particle assembly. Interacts with protease NS2. The heterodimer E1/E2 interacts with host CLDN1; this interaction plays a role in viral entry into host cell. Part of the viral assembly initiation complex composed of NS2, E1, E2, NS3, NS4A, NS5A and the mature core protein. Interacts with host SLC3A2/4F2hc; the interaction may facilitate viral entry into host cell. Interacts with human PLSCR1. As to quaternary structure, homohexamer. Homoheptamer. Interacts with protease NS2. Homodimer. Interacts with host SPCS1; this interaction is essential for viral particle assembly. Interacts with envelope glycoprotein E1. Interacts with envelope glycoprotein E2. Interacts with viroporin p7. Interacts with serine protease/helicase NS3. Part of the replication complex composed of NS2, NS3, NS4A, NS4B, NS5A and the RNA-directed RNA polymerase embedded in an ER-derived membranous web. Part of the viral assembly initiation complex composed of NS2, E1, E2, NS3, NS4A, NS5A and the mature core protein. In terms of assembly, interacts with protease NS2. Interacts with non-structural protein 4A; this interaction stabilizes the folding of NS3 serine protease. NS3-NS4A interaction is essential for NS3 activation and allows membrane anchorage of the latter. NS3/NS4A complex also prevents phosphorylation of host IRF3, thus preventing the establishment of dsRNA induced antiviral state. Interacts with host MAVS; this interaction leads to the cleavage and inhibition of host MAVS. Interacts with host TICAM1; this interaction leads to the cleavage and inhibition of host TICAM1. Interacts with host TANK-binding kinase/TBK1; this interaction results in the inhibition of the association between TBK1 and IRF3, which leads to the inhibition of IRF3 activation. Interacts with host RBM24. Part of the replication complex composed of NS2, NS3, NS4A, NS4B, NS5A and the RNA-directed RNA polymerase embedded in an ER-derived membranous web. Part of the viral assembly initiation complex composed of NS2, E1, E2, NS3, NS4A, NS5A and the mature core protein. As to quaternary structure, interacts with NS3 serine protease; this interaction stabilizes the folding of NS3 serine protease. NS3-NS4A interaction is essential for NS3 activation and allows membrane anchorage of the latter. Interacts with non-structural protein 5A (via N-terminus). Part of the replication complex composed of NS2, NS3, NS4A, NS4B, NS5A and the RNA-directed RNA polymerase embedded in an ER-derived membranous web. Part of the viral assembly initiation complex composed of NS2, E1, E2, NS3, NS4A, NS5A and the mature core protein. Homomultimer. Interacts with non-structural protein NS5A. Interacts with host PLA2G4C; this interaction likely initiates the recruitment of replication complexes to lipid droplets. Interacts with host STING; this interaction disrupts the interaction between STING and TBK1 thereby suppressing the interferon signaling. Part of the replication complex composed of NS2, NS3, NS4A, NS4B, NS5A and the RNA-directed RNA polymerase embedded in an ER-derived membranous web. In terms of assembly, monomer. Homodimer; dimerization is required for RNA-binding. Interacts with the mature core protein. Interacts (via N-terminus) with non-structural protein 4A. Interacts with non-structural protein 4B. Interacts (via region D2) with RNA-directed RNA polymerase. Part of the viral assembly initiation complex composed of NS2, E1, E2, NS3, NS4A, NS5A and the mature core protein. Part of the replication complex composed of NS2, NS3, NS4A, NS4B, NS5A and the RNA-directed RNA polymerase embedded in an ER-derived membranous web. Interacts with host GRB2. Interacts with host BIN1. Interacts with host PIK3R1. Interacts with host SRCAP. Interacts with host FKBP8. Interacts (via C-terminus) with host VAPB (via MSP domain). Interacts with host EIF2AK2/PKR; this interaction leads to disruption of EIF2AK2 dimerization by NS5A and probably allows the virus to evade the innate immune response. Interacts (via N-terminus) with host PACSIN2 (via N-terminus); this interaction attenuates protein kinase C alpha-mediated phosphorylation of PACSIN2 by disrupting the interaction between PACSIN2 and PRKCA. Interacts (via N-terminus) with host SRC kinase (via SH2 domain). Interacts with most Src-family kinases. Interacts with host IFI27 and SKP2; promotes the ubiquitin-mediated proteasomal degradation of NS5A. Interacts with host GPS2. Interacts with host TNFRSF21; this interaction allows the modulation by the virus of JNK, p38 MAPK, STAT3, and Akt signaling pathways in a DR6-dependent manner. Interacts (via N-terminus) with host CIDEB (via N-terminus); this interaction seems to regulate the association of HCV particles with APOE. Interacts with host CHKA/Choline Kinase-alpha; CHKA bridges host PI4KA and NS5A and potentiates NS5A-stimulated PI4KA activity, which then facilitates the targeting of the ternary complex to the ER for viral replication. Interacts with host SPSB2 (via C-terminus); this interaction targets NS5A for ubiquitination and degradation. Interacts with host RAB18; this interaction may promote the association of NS5A and other replicase components with lipid droplets. Interacts (via region D2) with host PPIA/CYPA; the interaction stimulates RNA-binding ability of NS5A and is dependent on the peptidyl-prolyl cis-trans isomerase activity of PPIA/CYPA. Interacts with host TRIM14; this interaction induces the degradation of NS5A. As to quaternary structure, homooligomer. Interacts with non-structural protein 5A. Interacts with host VAPB. Interacts with host PRK2/PKN2. Interacts with host HNRNPA1 and SEPT6; these interactions facilitate viral replication. Part of the replication complex composed of NS2, NS3, NS4A, NS4B, NS5A and the RNA-directed RNA polymerase. Zn(2+) serves as cofactor. Requires Mg(2+) as cofactor. Specific enzymatic cleavages in vivo yield mature proteins. The structural proteins, core, E1, E2 and p7 are produced by proteolytic processing by host signal peptidases. The core protein precursor is synthesized as a 23 kDa, which is retained in the ER membrane through the hydrophobic signal peptide. Cleavage by the signal peptidase releases the 21 kDa mature core protein. The cleavage of the core protein precursor occurs between aminoacids 176 and 188 but the exact cleavage site is not known. Some degraded forms of the core protein appear as well during the course of infection. The other proteins (p7, NS2, NS3, NS4A, NS4B, NS5A and NS5B) are cleaved by the viral proteases. Autoprocessing between NS2 and NS3 is mediated by the NS2 cysteine protease catalytic domain and regulated by the NS3 N-terminal domain. Post-translationally, phosphorylated by host PKC and PKA. In terms of processing, ubiquitinated; mediated by UBE3A and leading to core protein subsequent proteasomal degradation. Highly N-glycosylated. Post-translationally, palmitoylation is required for NS2/3 autoprocessing and E2 recruitment to membranes. In terms of processing, palmitoylated. This modification may play a role in its polymerization or in protein-protein interactions. Phosphorylated on serines in a basal form termed p56. p58 is a hyperphosphorylated form of p56. p56 and p58 coexist in the cell in roughly equivalent amounts. Hyperphosphorylation is dependent on the presence of NS4A. Host CSNK1A1/CKI-alpha or RPS6KB1 kinases may be responsible for NS5A phosphorylation. Post-translationally, tyrosine phosphorylation is essential for the interaction with host SRC. In terms of processing, the N-terminus is phosphorylated by host PRK2/PKN2.

The protein resides in the host endoplasmic reticulum membrane. The protein localises to the host mitochondrion membrane. It localises to the virion. It is found in the host cytoplasm. Its subcellular location is the host nucleus. The protein resides in the host lipid droplet. The protein localises to the virion membrane. It localises to the host mitochondrion. It is found in the host cell membrane. Its subcellular location is the host perinuclear region. It catalyses the reaction Hydrolysis of four peptide bonds in the viral precursor polyprotein, commonly with Asp or Glu in the P6 position, Cys or Thr in P1 and Ser or Ala in P1'.. It carries out the reaction a ribonucleoside 5'-triphosphate + H2O = a ribonucleoside 5'-diphosphate + phosphate + H(+). The catalysed reaction is ATP + H2O = ADP + phosphate + H(+). The enzyme catalyses RNA(n) + a ribonucleoside 5'-triphosphate = RNA(n+1) + diphosphate. Its activity is regulated as follows. Inhibited by the antiviral drug hexamethylene amiloride. Inhibition by amantadine appears to be genotype-dependent. Also inhibited by long-alkyl-chain iminosugar derivatives. With respect to regulation, activity is up-regulated by PRK2/PKN2-mediated phosphorylation. Its function is as follows. Packages viral RNA to form a viral nucleocapsid, and promotes virion budding. Participates in the viral particle production as a result of its interaction with the non-structural protein 5A. Binds RNA and may function as a RNA chaperone to induce the RNA structural rearrangements taking place during virus replication. Modulates viral translation initiation by interacting with viral IRES and 40S ribosomal subunit. Affects various cell signaling pathways, host immunity and lipid metabolism. Prevents the establishment of cellular antiviral state by blocking the interferon-alpha/beta (IFN-alpha/beta) and IFN-gamma signaling pathways and by blocking the formation of phosphorylated STAT1 and promoting ubiquitin-mediated proteasome-dependent degradation of STAT1. Activates STAT3 leading to cellular transformation. Regulates the activity of cellular genes, including c-myc and c-fos. May repress the promoter of p53, and sequester CREB3 and SP110 isoform 3/Sp110b in the cytoplasm. Represses cell cycle negative regulating factor CDKN1A, thereby interrupting an important check point of normal cell cycle regulation. Targets transcription factors involved in the regulation of inflammatory responses and in the immune response: suppresses TNF-induced NF-kappa-B activation, and activates AP-1. Binds to dendritic cells (DCs) via C1QR1, resulting in down-regulation of T-lymphocytes proliferation. Alters lipid metabolism by interacting with hepatocellular proteins involved in lipid accumulation and storage. Induces up-regulation of FAS promoter activity, and thereby contributes to the increased triglyceride accumulation in hepatocytes (steatosis). Functionally, forms a heterodimer with envelope glycoprotein E2, which mediates virus attachment to the host cell, virion internalization through clathrin-dependent endocytosis and fusion with host membrane. Fusion with the host cell is most likely mediated by both E1 and E2, through conformational rearrangements of the heterodimer required for fusion rather than a classical class II fusion mechanism. E1/E2 heterodimer binds host apolipoproteins such as APOB and ApoE thereby forming a lipo-viro-particle (LVP). APOE associated to the LVP allows the initial virus attachment to cell surface receptors such as the heparan sulfate proteoglycans (HSPGs), syndecan-1 (SDC1), syndecan-1 (SDC2), the low-density lipoprotein receptor (LDLR) and scavenger receptor class B type I (SCARB1). The cholesterol transfer activity of SCARB1 allows E2 exposure and binding of E2 to SCARB1 and the tetraspanin CD81. E1/E2 heterodimer binding on CD81 activates the epithelial growth factor receptor (EGFR) signaling pathway. Diffusion of the complex E1-E2-EGFR-SCARB1-CD81 to the cell lateral membrane allows further interaction with Claudin 1 (CLDN1) and occludin (OCLN) to finally trigger HCV entry. In terms of biological role, forms a heterodimer with envelope glycoprotein E1, which mediates virus attachment to the host cell, virion internalization through clathrin-dependent endocytosis and fusion with host membrane. Fusion with the host cell is most likely mediated by both E1 and E2, through conformational rearrangements of the heterodimer required for fusion rather than a classical class II fusion mechanism. The interaction between envelope glycoprotein E2 and host apolipoprotein E/APOE allows the proper assembly, maturation and infectivity of the viral particles. This interaction is probably promoted via the up-regulation of cellular autophagy by the virus. E1/E2 heterodimer binds host apolipoproteins such as APOB and APOE thereby forming a lipo-viro-particle (LVP). APOE associated to the LVP allows the initial virus attachment to cell surface receptors such as the heparan sulfate proteoglycans (HSPGs), syndecan-1 (SDC1), syndecan-1 (SDC2), the low-density lipoprotein receptor (LDLR) and scavenger receptor class B type I (SCARB1). The cholesterol transfer activity of SCARB1 allows E2 exposure and binding of E2 to SCARB1 and the tetraspanin CD81. E1/E2 heterodimer binding on CD81 activates the epithelial growth factor receptor (EGFR) signaling pathway. Diffusion of the complex E1-E2-EGFR-SCARB1-CD81 to the cell lateral membrane allows further interaction with Claudin 1 (CLDN1) and occludin (OCLN) to finally trigger HCV entry. Inhibits host EIF2AK2/PKR activation, preventing the establishment of an antiviral state. Viral ligand for CD209/DC-SIGN and CLEC4M/DC-SIGNR, which are respectively found on dendritic cells (DCs), and on liver sinusoidal endothelial cells and macrophage-like cells of lymph node sinuses. These interactions allow the capture of circulating HCV particles by these cells and subsequent facilitated transmission to permissive cells such as hepatocytes and lymphocyte subpopulations. The interaction between E2 and host amino acid transporter complex formed by SLC3A2 and SLC7A5/LAT1 may facilitate viral entry into host cell. Ion channel protein that acts as a viroporin and plays an essential role in the assembly, envelopment and secretion of viral particles. Regulates the host cell secretory pathway, which induces the intracellular retention of viral glycoproteins and favors assembly of viral particles. Creates a pore in acidic organelles and releases Ca(2+) and H(+) in the cytoplasm of infected cells, leading to a productive viral infection. High levels of cytoplasmic Ca(2+) may trigger membrane trafficking and transport of viral ER-associated proteins to viroplasms, sites of viral genome replication. This ionic imbalance induces the assembly of the inflammasome complex, which triggers the maturation of pro-IL-1beta into IL-1beta through the action of caspase-1. Targets also host mitochondria and induces mitochondrial depolarization. In addition of its role as a viroporin, acts as a lipid raft adhesion factor. Its function is as follows. Cysteine protease required for the proteolytic auto-cleavage between the non-structural proteins NS2 and NS3. The N-terminus of NS3 is required for the function of NS2 protease (active region NS2-3). Promotes the initiation of viral particle assembly by mediating the interaction between structural and non-structural proteins. Functionally, displays three enzymatic activities: serine protease with a chymotrypsin-like fold, NTPase and RNA helicase. NS3 serine protease, in association with NS4A, is responsible for the cleavages of NS3-NS4A, NS4A-NS4B, NS4B-NS5A and NS5A-NS5B. The NS3/NS4A complex prevents phosphorylation of host IRF3, thus preventing the establishment of dsRNA induced antiviral state. The NS3/NS4A complex induces host amino acid transporter component SLC3A2, thus contributing to HCV propagation. NS3 RNA helicase binds to RNA and unwinds both dsDNA and dsRNA in the 3' to 5' direction, and likely resolves RNA complicated stable secondary structures in the template strand. Binds a single ATP and catalyzes the unzipping of a single base pair of dsRNA. Inhibits host antiviral proteins TBK1 and IRF3 thereby preventing the establishment of an antiviral state. Cleaves host MAVS/CARDIF thereby preventing the establishment of an antiviral state. Cleaves host TICAM1/TRIF, thereby disrupting TLR3 signaling and preventing the establishment of an antiviral state. In terms of biological role, induces a specific membrane alteration that serves as a scaffold for the virus replication complex. This membrane alteration gives rise to the so-called ER-derived membranous web that contains the replication complex. NS4B self-interaction contributes to its function in membranous web formation. Promotes host TRIF protein degradation in a CASP8-dependent manner thereby inhibiting host TLR3-mediated interferon signaling. Disrupts the interaction between STING and TBK1 contributing to the inhibition of interferon signaling. Phosphorylated protein that is indispensable for viral replication and assembly. Both hypo- and hyperphosphorylated states are required for the viral life cycle. The hyperphosphorylated form of NS5A is an inhibitor of viral replication. Involved in RNA-binding and especially in binding to the viral genome. Zinc is essential for RNA-binding. Participates in the viral particle production as a result of its interaction with the mature viral core protein. Its interaction with host VAPB may target the viral replication complex to vesicles. Down-regulates viral IRES translation initiation. Mediates interferon resistance, presumably by interacting with and inhibiting host EIF2AK2/PKR. Prevents BIN1-induced apoptosis. Acts as a transcriptional activator of some host genes important for viral replication when localized in the nucleus. Via the interaction with host PACSIN2, modulates lipid droplet formation in order to promote virion assembly. Modulates TNFRSF21/DR6 signaling pathway for viral propagation. Its function is as follows. RNA-dependent RNA polymerase that performs primer-template recognition and RNA synthesis during viral replication. Initiates RNA transcription/replication at a flavin adenine dinucleotide (FAD), resulting in a 5'- FAD cap on viral RNAs. In this way, recognition of viral 5' RNA by host pattern recognition receptors can be bypassed, thereby evading activation of antiviral pathways. In Homo sapiens (Human), this protein is Genome polyprotein.